A 504-amino-acid polypeptide reads, in one-letter code: ATP synthase subunit alpha (504 aa).

Residue 169-176 (GDRQTGKT) coordinates ATP.

The protein belongs to the ATPase alpha/beta chains family. F-type ATPases have 2 components, CF(1) - the catalytic core - and CF(0) - the membrane proton channel. CF(1) has five subunits: alpha(3), beta(3), gamma(1), delta(1), epsilon(1). CF(0) has three main subunits: a(1), b(2) and c(9-12). The alpha and beta chains form an alternating ring which encloses part of the gamma chain. CF(1) is attached to CF(0) by a central stalk formed by the gamma and epsilon chains, while a peripheral stalk is formed by the delta and b chains.

Its subcellular location is the cell membrane. The catalysed reaction is ATP + H2O + 4 H(+)(in) = ADP + phosphate + 5 H(+)(out). Its function is as follows. Produces ATP from ADP in the presence of a proton gradient across the membrane. The alpha chain is a regulatory subunit. This chain is ATP synthase subunit alpha, found in Clostridium kluyveri (strain NBRC 12016).